Here is a 552-residue protein sequence, read N- to C-terminus: Urocanate hydratase (552 aa).

NAD(+) contacts are provided by residues 49–50 (GG), Gln127, 173–175 (GMG), Glu193, Arg198, 239–240 (NA), 260–264 (QTSAH), 270–271 (YI), and Tyr319. Cys407 is a catalytic residue. Gly489 serves as a coordination point for NAD(+).

It belongs to the urocanase family. It depends on NAD(+) as a cofactor.

The protein localises to the cytoplasm. The catalysed reaction is 4-imidazolone-5-propanoate = trans-urocanate + H2O. It functions in the pathway amino-acid degradation; L-histidine degradation into L-glutamate; N-formimidoyl-L-glutamate from L-histidine: step 2/3. In terms of biological role, catalyzes the conversion of urocanate to 4-imidazolone-5-propionate. The polypeptide is Urocanate hydratase (Geobacillus sp. (strain WCH70)).